Reading from the N-terminus, the 1568-residue chain is Plexin-C1 (1568 aa).

Residues methionine 1–glycine 34 form the signal peptide. One can recognise a Sema domain in the interval alanine 35 to valine 452. The Extracellular segment spans residues alanine 35 to threonine 944. Cysteine 64 and cysteine 87 are oxidised to a cystine. Residues asparagine 86, asparagine 141, and asparagine 149 are each glycosylated (N-linked (GlcNAc...) asparagine). 3 cysteine pairs are disulfide-bonded: cysteine 156–cysteine 194, cysteine 226–cysteine 354, and cysteine 283–cysteine 329. Asparagine 241 and asparagine 252 each carry an N-linked (GlcNAc...) asparagine glycan. N-linked (GlcNAc...) asparagine glycans are attached at residues asparagine 386 and asparagine 407. 4 disulfides stabilise this stretch: cysteine 455–cysteine 472, cysteine 461–cysteine 506, cysteine 464–cysteine 481, and cysteine 475–cysteine 487. Asparagine 548, asparagine 582, asparagine 653, asparagine 692, asparagine 771, asparagine 796, asparagine 821, asparagine 871, and asparagine 890 each carry an N-linked (GlcNAc...) asparagine glycan. Residues tryptophan 945 to valine 965 traverse the membrane as a helical segment. Over threonine 966–methionine 1568 the chain is Cytoplasmic. Serine 978 is modified (phosphoserine).

The protein belongs to the plexin family. Monomer. Homodimer. Interacts with SEMA7A. In terms of processing, N-glycosylated. In terms of tissue distribution, detected in heart, brain, lung, spleen and placenta.

The protein resides in the membrane. Receptor for SEMA7A, for smallpox semaphorin A39R, vaccinia virus semaphorin A39R and for herpesvirus Sema protein. Binding of semaphorins triggers cellular responses leading to the rearrangement of the cytoskeleton and to secretion of IL6 and IL8. In Homo sapiens (Human), this protein is Plexin-C1 (PLXNC1).